The sequence spans 447 residues: GTPase Der (447 aa).

2 EngA-type G domains span residues 4–165 (QIIT…PEEE) and 180–357 (LQIV…KIWN). GTP-binding positions include 10-17 (GRPNVGKS), 57-61 (DTPGL), 119-122 (NKCE), 186-193 (GRPNAGKS), 233-237 (DTAGL), and 298-301 (NKWD). Residues 358–443 (KKITTSKLNE…PIRFTYVKTK (86 aa)) enclose the KH-like domain.

This sequence belongs to the TRAFAC class TrmE-Era-EngA-EngB-Septin-like GTPase superfamily. EngA (Der) GTPase family. In terms of assembly, associates with the 50S ribosomal subunit.

GTPase that plays an essential role in the late steps of ribosome biogenesis. The protein is GTPase Der of Rickettsia rickettsii (strain Sheila Smith).